Reading from the N-terminus, the 110-residue chain is Large ribosomal subunit protein uL22 (110 aa).

This sequence belongs to the universal ribosomal protein uL22 family. As to quaternary structure, part of the 50S ribosomal subunit.

In terms of biological role, this protein binds specifically to 23S rRNA; its binding is stimulated by other ribosomal proteins, e.g. L4, L17, and L20. It is important during the early stages of 50S assembly. It makes multiple contacts with different domains of the 23S rRNA in the assembled 50S subunit and ribosome. The globular domain of the protein is located near the polypeptide exit tunnel on the outside of the subunit, while an extended beta-hairpin is found that lines the wall of the exit tunnel in the center of the 70S ribosome. The chain is Large ribosomal subunit protein uL22 from Histophilus somni (strain 129Pt) (Haemophilus somnus).